The following is a 261-amino-acid chain: Triosephosphate isomerase (261 aa).

A substrate-binding site is contributed by 10–12 (NWK). His-100 (electrophile) is an active-site residue. Glu-172 acts as the Proton acceptor in catalysis. Residues Gly-178, Ser-218, and 239-240 (GG) contribute to the substrate site.

Belongs to the triosephosphate isomerase family. As to quaternary structure, homodimer.

It is found in the cytoplasm. It carries out the reaction D-glyceraldehyde 3-phosphate = dihydroxyacetone phosphate. Its pathway is carbohydrate biosynthesis; gluconeogenesis. It participates in carbohydrate degradation; glycolysis; D-glyceraldehyde 3-phosphate from glycerone phosphate: step 1/1. Functionally, involved in the gluconeogenesis. Catalyzes stereospecifically the conversion of dihydroxyacetone phosphate (DHAP) to D-glyceraldehyde-3-phosphate (G3P). The polypeptide is Triosephosphate isomerase (Mycobacterium tuberculosis (strain CDC 1551 / Oshkosh)).